A 155-amino-acid polypeptide reads, in one-letter code: Endoribonuclease YbeY (155 aa).

Zn(2+)-binding residues include H116, H120, and H126.

It belongs to the endoribonuclease YbeY family. Zn(2+) is required as a cofactor.

Its subcellular location is the cytoplasm. Its function is as follows. Single strand-specific metallo-endoribonuclease involved in late-stage 70S ribosome quality control and in maturation of the 3' terminus of the 16S rRNA. This Colwellia psychrerythraea (strain 34H / ATCC BAA-681) (Vibrio psychroerythus) protein is Endoribonuclease YbeY.